We begin with the raw amino-acid sequence, 104 residues long: UPF0125 protein PSPTO_4512 (104 aa).

It belongs to the UPF0125 (RnfH) family.

The protein is UPF0125 protein PSPTO_4512 of Pseudomonas syringae pv. tomato (strain ATCC BAA-871 / DC3000).